A 425-amino-acid chain; its full sequence is Formyl-CoA:oxalate CoA-transferase (425 aa).

CoA-binding positions include 17 to 18, arginine 38, 72 to 75, 96 to 98, arginine 104, and 136 to 139; these read QS, LDTK, NFG, and KVYE. Aspartate 168 acts as the Nucleophile in catalysis. 247–249 is a substrate binding site; that stretch reads GGQ.

It belongs to the CoA-transferase III family. Frc subfamily. As to quaternary structure, homodimer.

It carries out the reaction formyl-CoA + oxalate = oxalyl-CoA + formate. Its pathway is metabolic intermediate degradation; oxalate degradation; CO(2) and formate from oxalate: step 1/2. In terms of biological role, involved in the catabolism of oxalate and in the adapatation to low pH via the induction of the oxalate-dependent acid tolerance response (ATR). Catalyzes the transfer of the CoA moiety from formyl-CoA to oxalate. The chain is Formyl-CoA:oxalate CoA-transferase from Bradyrhizobium diazoefficiens (strain JCM 10833 / BCRC 13528 / IAM 13628 / NBRC 14792 / USDA 110).